Consider the following 367-residue polypeptide: GPN-loop GTPase 1 (367 aa).

Residues 15–22 (GMAGSGKT) and 18–23 (GSGKTT) contribute to the GTP site. Positions 75-77 (GPN) match the Gly-Pro-Asn (GPN)-loop; involved in dimer interface motif. A GTP-binding site is contributed by 178-181 (NKCD). The stretch at 247-290 (EGMDDFLEAVKAKVKEYEEEYVPEMERMKEIQRQTKERQKEAQL) forms a coiled coil. Positions 306-332 (VGLTVSDAEDEYNGELVDPDEDDGLTA) are disordered. A Phosphoserine modification is found at serine 311. Over residues 312–332 (DAEDEYNGELVDPDEDDGLTA) the composition is skewed to acidic residues.

This sequence belongs to the GPN-loop GTPase family. Heterodimers with gpn2 or fet5/gpn3. Binds to RNA polymerase II (RNAPII).

The protein resides in the cytoplasm. Small GTPase required for proper nuclear import of RNA polymerase II (RNAPII). May act at an RNAP assembly step prior to nuclear import. The chain is GPN-loop GTPase 1 from Schizosaccharomyces pombe (strain 972 / ATCC 24843) (Fission yeast).